A 498-amino-acid polypeptide reads, in one-letter code: ATP synthase subunit beta, chloroplastic (498 aa).

Residue 172-179 (GGAGVGKT) coordinates ATP.

Belongs to the ATPase alpha/beta chains family. As to quaternary structure, F-type ATPases have 2 components, CF(1) - the catalytic core - and CF(0) - the membrane proton channel. CF(1) has five subunits: alpha(3), beta(3), gamma(1), delta(1), epsilon(1). CF(0) has four main subunits: a(1), b(1), b'(1) and c(9-12).

Its subcellular location is the plastid. The protein localises to the chloroplast thylakoid membrane. It carries out the reaction ATP + H2O + 4 H(+)(in) = ADP + phosphate + 5 H(+)(out). In terms of biological role, produces ATP from ADP in the presence of a proton gradient across the membrane. The catalytic sites are hosted primarily by the beta subunits. This is ATP synthase subunit beta, chloroplastic from Phoenix dactylifera (Date palm).